A 335-amino-acid polypeptide reads, in one-letter code: Ferrochelatase (335 aa).

Fe cation-binding residues include H192 and E291.

Belongs to the ferrochelatase family.

The protein localises to the cytoplasm. The enzyme catalyses heme b + 2 H(+) = protoporphyrin IX + Fe(2+). Its pathway is porphyrin-containing compound metabolism; protoheme biosynthesis; protoheme from protoporphyrin-IX: step 1/1. Catalyzes the ferrous insertion into protoporphyrin IX. This Bdellovibrio bacteriovorus (strain ATCC 15356 / DSM 50701 / NCIMB 9529 / HD100) protein is Ferrochelatase.